A 355-amino-acid polypeptide reads, in one-letter code: Peptide chain release factor 1 (355 aa).

N5-methylglutamine is present on Q231. The interval 283 to 303 (NAQNKEARKTQVGSGDRSERI) is disordered.

This sequence belongs to the prokaryotic/mitochondrial release factor family. In terms of processing, methylated by PrmC. Methylation increases the termination efficiency of RF1.

It is found in the cytoplasm. Its function is as follows. Peptide chain release factor 1 directs the termination of translation in response to the peptide chain termination codons UAG and UAA. The chain is Peptide chain release factor 1 from Helicobacter hepaticus (strain ATCC 51449 / 3B1).